The primary structure comprises 437 residues: Aromatic peroxidase fscJ (437 aa).

The signal sequence occupies residues 1 to 19 (MKWLHLLSVVACVADEVYA). Cysteine 83 serves as a coordination point for heme.

The protein belongs to the chloroperoxidase family. Heme b is required as a cofactor.

It participates in secondary metabolite biosynthesis. Its function is as follows. Aromatic peroxidase; part of the fragmented gene cluster that mediates the biosynthesis of fusarochromene, a tryptophan-derived metabolite closely related to a group of mycotoxins including fusarochromanone. The role of fscJ within the pathway has not been identified yet. The first step of the pathway is the epimerization of L-tryptophan to D-tryptophan in the presence of the NRPS-like tryptophan epimerase fscC. D-tryptophan is subsequently hydroxylated by the tryptophan 6-hydroxylase fscE to yield 6-hydroxytryptophan. The pyrrole ring undergoes cleavaged by the tryptophan 2,3-dioxygenase fscD and is finally converted to 4-hydroxykyrunenine by the hydrolase fscH. The NRPS-like oxidoreductase fscA reduces the carboxyl group to primary alcohol and the DMATS-type prenyltransferase fscG performs prenylation, followed by the formation of a chromene ring catalyzed by the oxidoreductase fscI, which leads to desacetylfusarochromene. Epoxidation by fscF and rearrangement reactions of chromene double bonds convert compound desacetylfusarochromene to fusarochromanones. Although specific acetyltransferases were not found near the fsc gene cluster, several predicted enzymes containing the N-acetyltransferase superfamily domain are present in the genome of F.equiseti. These predicted enzymes may have the potential to convert desacetylfusarochromene to fusarochromene. This chain is Aromatic peroxidase fscJ, found in Fusarium equiseti (Fusarium scirpi).